The following is a 622-amino-acid chain: Probable potassium transport system protein Kup (622 aa).

Transmembrane regions (helical) follow at residues 7 to 27 (LAIGAIGIVFGDIGTSPLYAF), 44 to 64 (VLGVVSLIFWSMTLIVAIQYV), 95 to 115 (GWLVVLLGVFATSLFYGDSMI), 133 to 153 (PELQGFVIPIALVLLVGLFVL), 165 to 185 (FAPVMIVYFTVIATLGLISIV), 199 to 219 (AVLFFINDGFLAFLALGSVVL), 243 to 263 (WFGFVMPCLLLNYFGQGAMIV), 290 to 310 (LVILATFATFIASQAVISGAF), 338 to 358 (IYIPVINWALMVAVILLVLTF), 370 to 390 (IAVTGAVTIDTLLMAVLLVGV), 395 to 415 (WYYAAPVVIVFLIIDGAYFAA), and 422 to 442 (DGGWFPLVVGLIVFTLLTTWA).

Belongs to the HAK/KUP transporter (TC 2.A.72) family.

It localises to the cell inner membrane. It catalyses the reaction K(+)(in) + H(+)(in) = K(+)(out) + H(+)(out). Transport of potassium into the cell. Likely operates as a K(+):H(+) symporter. The protein is Probable potassium transport system protein Kup of Erythrobacter litoralis (strain HTCC2594).